The chain runs to 331 residues: Anthranilate phosphoribosyltransferase (331 aa).

5-phospho-alpha-D-ribose 1-diphosphate is bound by residues G79, 82 to 83 (GD), T87, 89 to 92 (NIST), 107 to 115 (KHGNYGATS), and A119. Position 79 (G79) interacts with anthranilate. S91 provides a ligand contact to Mg(2+). N110 provides a ligand contact to anthranilate. R165 contacts anthranilate. Residues D223 and E224 each contribute to the Mg(2+) site.

The protein belongs to the anthranilate phosphoribosyltransferase family. Homodimer. Mg(2+) is required as a cofactor.

It catalyses the reaction N-(5-phospho-beta-D-ribosyl)anthranilate + diphosphate = 5-phospho-alpha-D-ribose 1-diphosphate + anthranilate. It participates in amino-acid biosynthesis; L-tryptophan biosynthesis; L-tryptophan from chorismate: step 2/5. Its function is as follows. Catalyzes the transfer of the phosphoribosyl group of 5-phosphorylribose-1-pyrophosphate (PRPP) to anthranilate to yield N-(5'-phosphoribosyl)-anthranilate (PRA). This Phocaeicola vulgatus (strain ATCC 8482 / DSM 1447 / JCM 5826 / CCUG 4940 / NBRC 14291 / NCTC 11154) (Bacteroides vulgatus) protein is Anthranilate phosphoribosyltransferase.